Reading from the N-terminus, the 186-residue chain is Mating-type-like protein ALPHA2 (186 aa).

The homeobox; TALE-type DNA-binding region spans 108 to 170 (ASYRGHRFTR…NRRRKQKSIY (63 aa)).

Belongs to the TALE/M-ATYP homeobox family.

The protein resides in the nucleus. Functionally, mating type proteins are sequence specific DNA-binding proteins that act as master switches in yeast differentiation by controlling gene expression in a cell type-specific fashion. The protein is Mating-type-like protein ALPHA2 (MTL1ALPHA2) of Candida glabrata (strain ATCC 2001 / BCRC 20586 / JCM 3761 / NBRC 0622 / NRRL Y-65 / CBS 138) (Yeast).